A 397-amino-acid chain; its full sequence is uncharacterized protein (397 aa).

4 helical membrane-spanning segments follow: residues 22-42 (ILTM…VAVG), 270-290 (IMTT…GIGV), 327-347 (VVLT…GAAL), and 362-382 (VVCG…MLPA).

It belongs to the ABC-4 integral membrane protein family. As to quaternary structure, part of a complex composed of YknX, YknY and YknZ. The complex interacts with YknW.

The protein localises to the cell membrane. It localises to the membrane raft. Its function is as follows. Part of an unusual four-component transporter, which is required for protection against the killing factor SdpC (sporulation-delaying protein). This is an uncharacterized protein from Bacillus subtilis (strain 168).